The chain runs to 379 residues: Synaptic vesicle membrane protein VAT-1 (379 aa).

Ser-273 bears the Phosphoserine mark.

Belongs to the zinc-containing alcohol dehydrogenase family. Quinone oxidoreductase subfamily. In terms of tissue distribution, cholinergic synaptic vesicles.

It is found in the cytoplasmic vesicle. It localises to the secretory vesicle. The protein localises to the synaptic vesicle membrane. Its function is as follows. May play a central role in the functions mediated by specific classes of synaptic vesicles. This is Synaptic vesicle membrane protein VAT-1 from Tetronarce californica (Pacific electric ray).